Here is a 158-residue protein sequence, read N- to C-terminus: Transcription factor BTF3 homolog 4 (158 aa).

The 66-residue stretch at 33 to 98 folds into the NAC-A/B domain; the sequence is TADDKKLQSS…AEAKPITEML (66 aa). Residues 124–158 form a disordered region; sequence VLDSKAPKSEDIDEEDDDVPDLAENFDEASKNEAN. Residues 134 to 150 are compositionally biased toward acidic residues; the sequence is DIDEEDDDVPDLAENFD.

It belongs to the NAC-beta family.

This Gallus gallus (Chicken) protein is Transcription factor BTF3 homolog 4 (BTF3L4).